Consider the following 76-residue polypeptide: Nemertide alpha-1 (76 aa).

Positions 1–28 (YRIASSSIAKMKTAVFLVGLLFLGLVFA) are cleaved as a signal peptide. Residues 29-44 (DEAAIDSEFDQSIDKR) constitute a propeptide that is removed on maturation. Disulfide bonds link cysteine 46-cysteine 60, cysteine 53-cysteine 64, and cysteine 59-cysteine 70. 2 positions are modified to 4-hydroxyproline: proline 72 and proline 73.

It belongs to the nemertide family. In terms of tissue distribution, confined to the epidermis and to the mucus layer.

It localises to the secreted. Functionally, highly potent toxin against insect sodium channel (Nav) and with less potent activity against mammalian sodium channels. Potently inhibits inactivation of insect sodium channels of B.germanica (BgNav1) (EC(50)=8.6 nM), D.melanogaster (Dm Nav1), and arachnid sodium channel V.destructor (VdNav1). Also delays the inactivation of most mammalian Nav channels tested (human Nav1.1/SCN1A; EC(50)=124.1 nM, rat Nav1.2/SCN2A; EC(50)=359.6 nM, rat Nav1.3/SCN3A; EC(50)=135.4 nM, rat Nav1.4/SCN4A; EC(50)=145.5 nM, human Nav1.5/SCN5A; EC(50)=138.3 nM, mouse Nav1.6/SCN8A; EC(50)=240.4 nM, human Nav1.9/SCN9A; EC(50)=76.5 nM). 1 uM is enough to completely inhibits the inactivation, resulting in sustained non-inactivating currents. In addition, the toxin significantly enhances the recovery from inactivation, and the open state is not required for the toxin to interact with the channel. In vivo, injection into green crabs (Carcinus maenas at 1 mug/kg) of small doses (1-5 ug/kg) results in slow and fast permanent paralysis, whereas injection of high doses (more than 10 ug/kg) causes death. Injection into juvenile Blaptica dubia cockroaches results in death or permanent paralysis at doses higher than 7.1 ug/kg. Injection into brine shrimp (Artemia salina) stops movement or causes death after 24 hours (EC(50)=0.3 uM). In the rare inherited cardiac arrhythmia Brugada syndrome 1 (BRGDA1), this toxin is able to restore the loss of function by reducing channel inactivation, without affecting activation, by binding to Nav1.5/SCN5A. This Lineus lacteus (Ribbon worm) protein is Nemertide alpha-1.